The following is a 73-amino-acid chain: U-scoloptoxin(15)-Sm3a (73 aa).

An N-terminal signal peptide occupies residues 1–23 (MERKVFLLLFVIVLLTLPGFMSA).

Belongs to the scoloptoxin-15 family. Contains 2 disulfide bonds. Expressed by the venom gland.

It localises to the secreted. The chain is U-scoloptoxin(15)-Sm3a from Scolopendra morsitans (Tanzanian blue ringleg centipede).